The sequence spans 450 residues: UDP-N-acetylmuramoylalanine--D-glutamate ligase (450 aa).

An ATP-binding site is contributed by 111 to 117; the sequence is GTNGKST.

It belongs to the MurCDEF family.

It localises to the cytoplasm. The catalysed reaction is UDP-N-acetyl-alpha-D-muramoyl-L-alanine + D-glutamate + ATP = UDP-N-acetyl-alpha-D-muramoyl-L-alanyl-D-glutamate + ADP + phosphate + H(+). It functions in the pathway cell wall biogenesis; peptidoglycan biosynthesis. In terms of biological role, cell wall formation. Catalyzes the addition of glutamate to the nucleotide precursor UDP-N-acetylmuramoyl-L-alanine (UMA). In Rickettsia bellii (strain RML369-C), this protein is UDP-N-acetylmuramoylalanine--D-glutamate ligase.